The primary structure comprises 265 residues: MNYLVNYCKISFYFLMSISLSLFLISLKFLLTDLVYFIEWEILSLQSMSIVMTFLFDWMSLMFMSFVLLISSLVIFYSNQYMEEDYNINRFILLVLMFVMSMMMLIISPNLISILLGWDGLGLVSYCLVIYFQNVKSYNAGMLTALSNRIGDVALLLAIAWMLNYGSWNYIFYLDMMKNNIEMMIIGGLVMLAAMTKSAQIPFSSWLPAAMAAPTPVSALVHSSTLVTAGVYLLIRFNDVLMNWWMAQFLLLVSGLTMFMAGLGA.

8 helical membrane-spanning segments follow: residues 10–30 (ISFYFLMSISLSLFLISLKFL), 50–70 (IVMTFLFDWMSLMFMSFVLLI), 92–112 (ILLVLMFVMSMMMLIISPNLI), 113–133 (SILLGWDGLGLVSYCLVIYFQ), 153–173 (VALLLAIAWMLNYGSWNYIFY), 183–203 (MMIIGGLVMLAAMTKSAQIPF), 215–235 (TPVSALVHSSTLVTAGVYLLI), and 244–264 (WWMAQFLLLVSGLTMFMAGLG).

Belongs to the complex I subunit 5 family.

Its subcellular location is the mitochondrion inner membrane. The enzyme catalyses a ubiquinone + NADH + 5 H(+)(in) = a ubiquinol + NAD(+) + 4 H(+)(out). Its function is as follows. Core subunit of the mitochondrial membrane respiratory chain NADH dehydrogenase (Complex I) that is believed to belong to the minimal assembly required for catalysis. Complex I functions in the transfer of electrons from NADH to the respiratory chain. The immediate electron acceptor for the enzyme is believed to be ubiquinone. The sequence is that of NADH-ubiquinone oxidoreductase chain 5 (ND5) from Anopheles quadriannulatus (Mosquito).